Consider the following 657-residue polypeptide: DNA ligase (657 aa).

80–81 (SL) contacts NAD(+). Catalysis depends on K104, which acts as the N6-AMP-lysine intermediate. 3 residues coordinate NAD(+): R125, E159, and K297. 4 residues coordinate Zn(2+): C386, C389, C406, and C411. Residues 571-657 (QSEQIFENLN…EWLNNGVRPE (87 aa)) form the BRCT domain.

This sequence belongs to the NAD-dependent DNA ligase family. LigA subfamily. Requires Mg(2+) as cofactor. The cofactor is Mn(2+).

The catalysed reaction is NAD(+) + (deoxyribonucleotide)n-3'-hydroxyl + 5'-phospho-(deoxyribonucleotide)m = (deoxyribonucleotide)n+m + AMP + beta-nicotinamide D-nucleotide.. Functionally, DNA ligase that catalyzes the formation of phosphodiester linkages between 5'-phosphoryl and 3'-hydroxyl groups in double-stranded DNA using NAD as a coenzyme and as the energy source for the reaction. It is essential for DNA replication and repair of damaged DNA. The chain is DNA ligase from Ruminiclostridium cellulolyticum (strain ATCC 35319 / DSM 5812 / JCM 6584 / H10) (Clostridium cellulolyticum).